A 430-amino-acid chain; its full sequence is Adenylosuccinate synthetase (430 aa).

GTP-binding positions include 12-18 (GDEGKGK) and 40-42 (GHT). The Proton acceptor role is filled by Asp13. Asp13 and Gly40 together coordinate Mg(2+). Residues 13-16 (DEGK), 38-41 (NAGH), Thr130, Arg144, Gln224, Thr239, and Arg303 contribute to the IMP site. His41 serves as the catalytic Proton donor. 299 to 305 (VNTGRKR) provides a ligand contact to substrate. GTP is bound by residues Arg305, 331–333 (KLD), and 413–415 (STS).

Belongs to the adenylosuccinate synthetase family. Homodimer. Requires Mg(2+) as cofactor.

The protein localises to the cytoplasm. The enzyme catalyses IMP + L-aspartate + GTP = N(6)-(1,2-dicarboxyethyl)-AMP + GDP + phosphate + 2 H(+). Its pathway is purine metabolism; AMP biosynthesis via de novo pathway; AMP from IMP: step 1/2. In terms of biological role, plays an important role in the de novo pathway of purine nucleotide biosynthesis. Catalyzes the first committed step in the biosynthesis of AMP from IMP. The chain is Adenylosuccinate synthetase from Rhodopseudomonas palustris (strain ATCC BAA-98 / CGA009).